A 198-amino-acid polypeptide reads, in one-letter code: dITP/XTP pyrophosphatase (198 aa).

11-16 contributes to the substrate binding site; sequence THNPGK. Mg(2+)-binding residues include E44 and D73. D73 (proton acceptor) is an active-site residue. Substrate is bound by residues S74, 156–159, K179, and 184–185; these read FGYD and HR.

The protein belongs to the HAM1 NTPase family. In terms of assembly, homodimer. It depends on Mg(2+) as a cofactor.

It catalyses the reaction XTP + H2O = XMP + diphosphate + H(+). The catalysed reaction is dITP + H2O = dIMP + diphosphate + H(+). It carries out the reaction ITP + H2O = IMP + diphosphate + H(+). Functionally, pyrophosphatase that catalyzes the hydrolysis of nucleoside triphosphates to their monophosphate derivatives, with a high preference for the non-canonical purine nucleotides XTP (xanthosine triphosphate), dITP (deoxyinosine triphosphate) and ITP. Seems to function as a house-cleaning enzyme that removes non-canonical purine nucleotides from the nucleotide pool, thus preventing their incorporation into DNA/RNA and avoiding chromosomal lesions. The polypeptide is dITP/XTP pyrophosphatase (ysnA) (Bacillus subtilis (strain 168)).